The sequence spans 95 residues: Aspartyl/glutamyl-tRNA(Asn/Gln) amidotransferase subunit C (95 aa).

This sequence belongs to the GatC family. In terms of assembly, heterotrimer of A, B and C subunits.

It carries out the reaction L-glutamyl-tRNA(Gln) + L-glutamine + ATP + H2O = L-glutaminyl-tRNA(Gln) + L-glutamate + ADP + phosphate + H(+). It catalyses the reaction L-aspartyl-tRNA(Asn) + L-glutamine + ATP + H2O = L-asparaginyl-tRNA(Asn) + L-glutamate + ADP + phosphate + 2 H(+). Its function is as follows. Allows the formation of correctly charged Asn-tRNA(Asn) or Gln-tRNA(Gln) through the transamidation of misacylated Asp-tRNA(Asn) or Glu-tRNA(Gln) in organisms which lack either or both of asparaginyl-tRNA or glutaminyl-tRNA synthetases. The reaction takes place in the presence of glutamine and ATP through an activated phospho-Asp-tRNA(Asn) or phospho-Glu-tRNA(Gln). This Methylorubrum populi (strain ATCC BAA-705 / NCIMB 13946 / BJ001) (Methylobacterium populi) protein is Aspartyl/glutamyl-tRNA(Asn/Gln) amidotransferase subunit C.